The chain runs to 475 residues: Maintenance of mitochondrial morphology protein 1 (475 aa).

At 1 to 14 (MSETFSPNLTFTEG) the chain is on the lumenal side. Residues 15–35 (FVLGQASFLIILLLFIRYVVF) form a helical membrane-spanning segment. At 36 to 475 (SPSEQIDHEG…VTPGQVGTSR (440 aa)) the chain is on the cytoplasmic side. The region spanning 80–278 (PAESSDWVNV…HPNHISLALP (199 aa)) is the SMP-LTD domain. Disordered stretches follow at residues 321 to 381 (NPVE…GQPQ) and 394 to 475 (SYPH…GTSR). Positions 341–351 (PPTPLVQPPGT) are enriched in pro residues. 2 stretches are compositionally biased toward polar residues: residues 353–380 (PTLS…QGQP) and 394–403 (SYPHYNTYTL). The segment covering 442–464 (STTSSLTPSQSQSQFRFRGQFAS) has biased composition (low complexity).

This sequence belongs to the MMM1 family. Homodimer. Component of the ER-mitochondria encounter structure (ERMES) or MDM complex, composed of MMM1, MDM10, MDM12 and MDM34. An MMM1 homodimer associates with one molecule of MDM12 on each side in a pairwise head-to-tail manner, and the SMP-LTD domains of MMM1 and MDM12 generate a continuous hydrophobic tunnel for phospholipid trafficking.

It is found in the endoplasmic reticulum membrane. Its function is as follows. Component of the ERMES/MDM complex, which serves as a molecular tether to connect the endoplasmic reticulum (ER) and mitochondria. Components of this complex are involved in the control of mitochondrial shape and protein biogenesis, and function in nonvesicular lipid trafficking between the ER and mitochondria. The MDM12-MMM1 subcomplex functions in the major beta-barrel assembly pathway that is responsible for biogenesis of all outer membrane beta-barrel proteins, and acts in a late step after the SAM complex. The MDM10-MDM12-MMM1 subcomplex further acts in the TOM40-specific pathway after the action of the MDM12-MMM1 complex. Essential for establishing and maintaining the structure of mitochondria and maintenance of mtDNA nucleoids. This Cryptococcus neoformans var. neoformans serotype D (strain B-3501A) (Filobasidiella neoformans) protein is Maintenance of mitochondrial morphology protein 1.